Here is a 169-residue protein sequence, read N- to C-terminus: NADH-quinone oxidoreductase subunit B (169 aa).

[4Fe-4S] cluster is bound by residues C42, C43, C107, and C136.

The protein belongs to the complex I 20 kDa subunit family. In terms of assembly, NDH-1 is composed of 14 different subunits. Subunits NuoB, C, D, E, F, and G constitute the peripheral sector of the complex. It depends on [4Fe-4S] cluster as a cofactor.

The protein localises to the cell inner membrane. It carries out the reaction a quinone + NADH + 5 H(+)(in) = a quinol + NAD(+) + 4 H(+)(out). Its function is as follows. NDH-1 shuttles electrons from NADH, via FMN and iron-sulfur (Fe-S) centers, to quinones in the respiratory chain. The immediate electron acceptor for the enzyme in this species is believed to be ubiquinone. Couples the redox reaction to proton translocation (for every two electrons transferred, four hydrogen ions are translocated across the cytoplasmic membrane), and thus conserves the redox energy in a proton gradient. The sequence is that of NADH-quinone oxidoreductase subunit B from Sulfurimonas denitrificans (strain ATCC 33889 / DSM 1251) (Thiomicrospira denitrificans (strain ATCC 33889 / DSM 1251)).